We begin with the raw amino-acid sequence, 541 residues long: Tryptophan N-monooxygenase 1 (541 aa).

Residues 21 to 41 form a helical membrane-spanning segment; that stretch reads FSTLYLLSTLQAFVAITLVML. A heme-binding site is contributed by Cys477.

This sequence belongs to the cytochrome P450 family. Requires heme as cofactor. As to expression, found in all tissues tested. Highest expression in roots, and low expression in stem.

The protein localises to the membrane. The catalysed reaction is L-tryptophan + 2 reduced [NADPH--hemoprotein reductase] + 2 O2 = (E)-(indol-3-yl)acetaldehyde oxime + 2 oxidized [NADPH--hemoprotein reductase] + CO2 + 3 H2O + 2 H(+). Converts tryptophan to indole-3-acetaldoxime, a precursor for tryptophan-derived glucosinolates and indole-3-acetic acid (IAA). Involved in the biosynthetic pathway to 4-hydroxyindole-3-carbonyl nitrile (4-OH-ICN), a cyanogenic metabolite required for inducible pathogen defense. This is Tryptophan N-monooxygenase 1 (CYP79B2) from Arabidopsis thaliana (Mouse-ear cress).